Reading from the N-terminus, the 316-residue chain is Ornithine carbamoyltransferase (316 aa).

Carbamoyl phosphate contacts are provided by residues 59–62 (STRT), Gln86, Arg110, and 137–140 (HPCQ). L-ornithine-binding positions include Asn168, Asp232, and 236-237 (SM). Residues 273–274 (CL) and Arg301 each bind carbamoyl phosphate.

The protein belongs to the aspartate/ornithine carbamoyltransferase superfamily. OTCase family.

It is found in the cytoplasm. It carries out the reaction carbamoyl phosphate + L-ornithine = L-citrulline + phosphate + H(+). It participates in amino-acid biosynthesis; L-arginine biosynthesis; L-arginine from L-ornithine and carbamoyl phosphate: step 1/3. Reversibly catalyzes the transfer of the carbamoyl group from carbamoyl phosphate (CP) to the N(epsilon) atom of ornithine (ORN) to produce L-citrulline. In Listeria monocytogenes serotype 4b (strain F2365), this protein is Ornithine carbamoyltransferase.